We begin with the raw amino-acid sequence, 105 residues long: Small ribosomal subunit protein uS10 (105 aa).

The protein belongs to the universal ribosomal protein uS10 family. In terms of assembly, part of the 30S ribosomal subunit.

Its function is as follows. Involved in the binding of tRNA to the ribosomes. This is Small ribosomal subunit protein uS10 from Synechococcus sp. (strain JA-3-3Ab) (Cyanobacteria bacterium Yellowstone A-Prime).